Reading from the N-terminus, the 570-residue chain is Proline--tRNA ligase (570 aa).

It belongs to the class-II aminoacyl-tRNA synthetase family. ProS type 1 subfamily. As to quaternary structure, homodimer.

It localises to the cytoplasm. It catalyses the reaction tRNA(Pro) + L-proline + ATP = L-prolyl-tRNA(Pro) + AMP + diphosphate. Functionally, catalyzes the attachment of proline to tRNA(Pro) in a two-step reaction: proline is first activated by ATP to form Pro-AMP and then transferred to the acceptor end of tRNA(Pro). As ProRS can inadvertently accommodate and process non-cognate amino acids such as alanine and cysteine, to avoid such errors it has two additional distinct editing activities against alanine. One activity is designated as 'pretransfer' editing and involves the tRNA(Pro)-independent hydrolysis of activated Ala-AMP. The other activity is designated 'posttransfer' editing and involves deacylation of mischarged Ala-tRNA(Pro). The misacylated Cys-tRNA(Pro) is not edited by ProRS. The sequence is that of Proline--tRNA ligase from Clostridium acetobutylicum (strain ATCC 824 / DSM 792 / JCM 1419 / IAM 19013 / LMG 5710 / NBRC 13948 / NRRL B-527 / VKM B-1787 / 2291 / W).